A 194-amino-acid chain; its full sequence is Small COPII coat GTPase SAR1B (194 aa).

Residues 2–4 carry the STAR; SAR1-N-terminal activation recruitment. Required for the activation and subsequent recruitment to ER membrane motif; sequence FLV. Positions 10–14 are mediates recruitment to ER membranes; sequence MFLWL. GDP-binding residues include asparagine 30, alanine 31, glycine 32, lysine 33, threonine 34, and threonine 35. Asparagine 30 contributes to the GTP binding site. GTP contacts are provided by glycine 32, lysine 33, threonine 34, and threonine 35. Aspartate 70 lines the Mg(2+) pocket. Lysine 131, aspartate 133, and isoleucine 172 together coordinate GDP. Residues lysine 131, aspartate 133, and isoleucine 172 each coordinate GTP.

The protein belongs to the small GTPase superfamily. SAR1 family. Homodimer; upon association with membrane. Part of the coat protein complex II/COPII, composed of SEC23/24 and SEC13/31 heterodimers, that it helps recruit and assemble on endoplasmic reticulum (ER) membranes at ER exit sites.

It is found in the endoplasmic reticulum membrane. Its subcellular location is the golgi apparatus. The protein resides in the golgi stack membrane. It localises to the cytoplasm. The protein localises to the cytosol. It carries out the reaction GTP + H2O = GDP + phosphate + H(+). With respect to regulation, small GTPases activation is mediated by guanine exchange factors (GEF), while inactivation through hydrolysis of the bound GTP is stimulated by GTPase activating proteins (GAP). Functionally, small GTPase that cycles between an active GTP-bound and an inactive GDP-bound state and mainly functions in vesicle-mediated endoplasmic reticulum (ER) to Golgi transport. The active GTP-bound form inserts into the endoplasmic reticulum membrane where it recruits the remainder of the coat protein complex II/COPII. The coat protein complex II assembling and polymerizing on endoplasmic reticulum membrane is responsible for both the sorting of cargos and the deformation and budding of membranes into vesicles destined to the Golgi. This is Small COPII coat GTPase SAR1B (sarB) from Dictyostelium discoideum (Social amoeba).